The primary structure comprises 185 residues: HTH-type transcriptional regulator SAR2658 (185 aa).

The 61-residue stretch at Lys-6–Phe-66 folds into the HTH tetR-type domain. A DNA-binding region (H-T-H motif) is located at residues Ser-29–Phe-48.

The protein is HTH-type transcriptional regulator SAR2658 of Staphylococcus aureus (strain MRSA252).